A 205-amino-acid polypeptide reads, in one-letter code: Recombination protein RecR (205 aa).

Residues 60–75 (CKVCHNISDTETCQIC) form a C4-type zinc finger. A Toprim domain is found at 83–178 (STVCVVENIR…KLSVIARGIS (96 aa)).

The protein belongs to the RecR family.

May play a role in DNA repair. It seems to be involved in an RecBC-independent recombinational process of DNA repair. It may act with RecF and RecO. This is Recombination protein RecR from Bacteroides thetaiotaomicron (strain ATCC 29148 / DSM 2079 / JCM 5827 / CCUG 10774 / NCTC 10582 / VPI-5482 / E50).